We begin with the raw amino-acid sequence, 245 residues long: Probable phosphatase YcdX (245 aa).

Zn(2+)-binding residues include histidine 7, histidine 9, histidine 15, histidine 40, glutamate 73, histidine 101, histidine 131, aspartate 192, and histidine 194.

It belongs to the PHP family. Homotrimer. Zn(2+) serves as cofactor.

In Salmonella heidelberg (strain SL476), this protein is Probable phosphatase YcdX.